The following is a 124-amino-acid chain: Small ribosomal subunit protein uS12 (124 aa).

Asp89 carries the post-translational modification 3-methylthioaspartic acid.

This sequence belongs to the universal ribosomal protein uS12 family. In terms of assembly, part of the 30S ribosomal subunit. Contacts proteins S8 and S17. May interact with IF1 in the 30S initiation complex.

In terms of biological role, with S4 and S5 plays an important role in translational accuracy. Its function is as follows. Interacts with and stabilizes bases of the 16S rRNA that are involved in tRNA selection in the A site and with the mRNA backbone. Located at the interface of the 30S and 50S subunits, it traverses the body of the 30S subunit contacting proteins on the other side and probably holding the rRNA structure together. The combined cluster of proteins S8, S12 and S17 appears to hold together the shoulder and platform of the 30S subunit. The chain is Small ribosomal subunit protein uS12 from Aliivibrio fischeri (strain ATCC 700601 / ES114) (Vibrio fischeri).